The following is a 522-amino-acid chain: Serine/threonine protein phosphatase 2A 59 kDa regulatory subunit B' gamma isoform (522 aa).

A disordered region spans residues 1–74; it reads MIKQIFGKLP…SSTSSNRTNQ (74 aa). The span at 35–58 shows a compositional bias: low complexity; that stretch reads PNSGISSISKPSSKSSASNSNGAN. A compositionally biased stretch (polar residues) spans 63–74; sequence APSSTSSNRTNQ.

Belongs to the phosphatase 2A regulatory subunit B56 family. In terms of assembly, PP2A consists of a common heteromeric enzyme, composed of a catalytic subunit (subunits C), a constant regulatory subunit (subunit A), and a variety of regulatory subunits such as subunits B (the R2/B/PR55/B55, R3/B''/PR72/PR130/PR59 and R5/B'/B56 families). Interacts with BRI1. Interacts with IGMT1 and IGMT4. Interacts with ACO3 in the cytosol. Expressed ubiquitously at low levels. Expressed in roots, emerging lateral roots, cotyledons, leaves, floral stalks and flowers.

The protein resides in the cytoplasm. It localises to the cytosol. It is found in the nucleus. Its function is as follows. The B regulatory subunit may modulate substrate selectivity and catalytic activity, and may also direct the localization of the catalytic enzyme to a particular subcellular compartment. Required for the formation of the PP2A holoenzyme that negatively regulates brassinosteroid signaling by dephosphorylating and inactivating BRI1 in the cytoplasm. Seems to be functionally connected with CPR5 and may mediate the negative regulation of defense reactions and senescence under low irradiances. May contribute to the epigenetic regulation of defense gene expression. Involved in the control of methoxylation of indole glucosinolates and formation of 4-methoxy- indol-3-yl-methyl glucosinolate in leaves, through direct interaction with indole glucosinolate methyltransferases. Involved in growth regulation and stress signaling. Involved in the regulation of reactive oxygen species (ROS) signaling and maintenance of cellular ROS homeostasis. Required to control the level of ACO3 phosphorylation in the cytoplasm. Regulates hydrogen peroxide metabolism by controlling the abundance of AOX1A and AXO3/AOX1D in leaf mitochondria. May mediate dephosphorylation of CRT1 and promote the degradation of unfolded proteins in endoplasmic reticulum (ER). Involved in the regulation of flowering time by repressing FLC, the main flowering repressor gene. The chain is Serine/threonine protein phosphatase 2A 59 kDa regulatory subunit B' gamma isoform (B'GAMMA) from Arabidopsis thaliana (Mouse-ear cress).